Reading from the N-terminus, the 345-residue chain is Protein CHROMOSOME TRANSMISSION FIDELITY 7 (345 aa).

The segment at 96–120 (RHCAECGAKYAPGDELDEKNHQSFH) adopts a CCHH-type zinc-finger fold.

It belongs to the acetyltransferase family. ECO subfamily. Post-translationally, autoacetylated. As to expression, expressed in roots, stems, leaves, young seedlings and flower buds. Detected in the embryo, but not in the endosperm.

The protein resides in the nucleus. Its subcellular location is the cytoplasm. Acetyltransferase required for the establishment of sister chromatid cohesion. Involved in preservation of genome integrity and meiosis. Required for DNA repair and for the regulation of chromosome segregation during mitotic cell division. Knock-down mutants are extremely dwarf. Regulator of sister chromatid cohesion in meiosis which negatively regulates cohesin association with chromatin, acting as an antagonist of WAPL1 and WAPL2. The sequence is that of Protein CHROMOSOME TRANSMISSION FIDELITY 7 from Arabidopsis thaliana (Mouse-ear cress).